Here is a 1915-residue protein sequence, read N- to C-terminus: Cysteine repeat modular protein 2 (1915 aa).

A signal peptide spans 1 to 23; that stretch reads MKFKKELINILALIFVLKKNIFA. 5 FU repeats span residues 53-98, 104-151, 161-208, 210-263, and 267-315; these read LGLC…QTYV, SCIC…GYTQ, QLLC…LQYK, NGIC…GYVV, and TQRC…GNYQ. Asparagine 138 carries N-linked (GlcNAc...) asparagine glycosylation. Residues asparagine 274, asparagine 279, and asparagine 316 are each glycosylated (N-linked (GlcNAc...) asparagine). FU repeat units follow at residues 317–362, 373–422, 427–492, 496–546, and 554–602; these read SSLC…GFYT, QPIC…QTYY, TRSC…GFYQ, NNSC…SQNN, and TQAC…GTYM. Residue asparagine 409 is glycosylated (N-linked (GlcNAc...) asparagine). 4 N-linked (GlcNAc...) asparagine glycosylation sites follow: asparagine 496, asparagine 572, asparagine 603, and asparagine 621. FU repeat units lie at residues 606-639, 640-686, and 690-739; these read TNQC…LQQN, YNVC…GFYV, and QQAC…NECL. The N-linked (GlcNAc...) asparagine glycan is linked to asparagine 742. 2 FU repeats span residues 760 to 814 and 818 to 865; these read DGQC…GFYY and NKQC…GYYQ. N-linked (GlcNAc...) asparagine glycans are attached at residues asparagine 909, asparagine 930, asparagine 1051, asparagine 1085, and asparagine 1193. The region spanning 1184 to 1224 is the EGF-like domain; sequence VQIPCDSNINCSGNGKCLWSQDNYNEILCICNINYAGRYCE. Cystine bridges form between cysteine 1188–cysteine 1200, cysteine 1194–cysteine 1212, and cysteine 1214–cysteine 1223. N-linked (GlcNAc...) asparagine glycosylation is found at asparagine 1250, asparagine 1297, asparagine 1519, asparagine 1546, asparagine 1554, asparagine 1580, and asparagine 1596. Transmembrane regions (helical) follow at residues 1599–1619, 1662–1682, 1704–1724, 1763–1783, and 1796–1816; these read LLYA…ISII, YAQL…VYSL, STSV…VNLF, GLVF…ILSF, and FASF…FCFI. The N-linked (GlcNAc...) asparagine glycan is linked to asparagine 1867.

It localises to the membrane. Functionally, required for mucocyst secretion. The sequence is that of Cysteine repeat modular protein 2 from Tetrahymena thermophila (strain SB210).